The sequence spans 336 residues: TBC1 domain family member 21 (336 aa).

The region spanning glycine 57–lysine 265 is the Rab-GAP TBC domain.

In terms of assembly, interacts with ACTB. Interacts with ARMC12. Interacts with TOMM20 and DNAH7. Interacts with RAP1A. Interacts with RAB10. As to expression, expressed in testis, specifically in elongating and elongated spermatids (at protein level). Expressed in the sperm midpiece (at protein level).

The protein resides in the cytoplasmic vesicle. It is found in the secretory vesicle. Its subcellular location is the acrosome. It localises to the cytoplasm. The protein localises to the cytoskeleton. Acts as a GTPase-activating protein for Rab family protein (s). Essential for the establishment of male fertility, and is required for both the production of normal sperm number and sperm function. Plays an important role in the formation of intact mitochondria, outer dense fibers and axoneme within the sperm tail. Essential for sperm mitochondrial sheath formation and for the interactions of ARMC12 with VDAC2 and VDAC3. May be involved in acrosome formation and cytoskeletal reorganization during spermiogenesis, possibly by regulating RAB3A activity. The chain is TBC1 domain family member 21 from Mus musculus (Mouse).